The chain runs to 153 residues: Arginine repressor (153 aa).

The protein belongs to the ArgR family.

Its subcellular location is the cytoplasm. It functions in the pathway amino-acid biosynthesis; L-arginine biosynthesis [regulation]. Functionally, regulates arginine biosynthesis genes. In Syntrophomonas wolfei subsp. wolfei (strain DSM 2245B / Goettingen), this protein is Arginine repressor.